The sequence spans 91 residues: Small ribosomal subunit protein uS19 (91 aa).

The protein belongs to the universal ribosomal protein uS19 family.

Protein S19 forms a complex with S13 that binds strongly to the 16S ribosomal RNA. This chain is Small ribosomal subunit protein uS19, found in Bordetella bronchiseptica (strain ATCC BAA-588 / NCTC 13252 / RB50) (Alcaligenes bronchisepticus).